The sequence spans 149 residues: uncharacterized protein (149 aa).

This is an uncharacterized protein from Homo sapiens (Human).